We begin with the raw amino-acid sequence, 244 residues long: Short-chain dehydrogenase/reductase family member NovK (244 aa).

NADP(+)-binding positions include 9–12, 59–60, and 154–158; these read GGGE, EL, and RPVLD.

This sequence belongs to the short-chain dehydrogenases/reductases (SDR) family. As to quaternary structure, heterotetramer; the NovJ(2)K(2) heterotetramer is composed of subunits of 2 NovJ and 2 subunits of NovK.

The protein operates within antibiotic biosynthesis; novobiocin biosynthesis. Its function is as follows. Non-catalytic subunit of the NovJ(2)K(2) heterotetramer that catalyzes the NADPH-dependent reduction of the tyrosyl moiety of L-beta-OH-Tyr-S-NovH intermediate to yield the tethered beta-ketotyrosyl-S-NovH in the novobiocin biosynthesis pathway. Novobiocin is an aminocoumarin family antibiotic that targets bacterial DNA gyrases. This Streptomyces niveus (Streptomyces spheroides) protein is Short-chain dehydrogenase/reductase family member NovK (novK).